A 156-amino-acid chain; its full sequence is Arginine repressor (156 aa).

It belongs to the ArgR family.

The protein resides in the cytoplasm. It functions in the pathway amino-acid biosynthesis; L-arginine biosynthesis [regulation]. Its function is as follows. Regulates arginine biosynthesis genes. This is Arginine repressor from Shewanella piezotolerans (strain WP3 / JCM 13877).